The primary structure comprises 979 residues: Protein SMAX1-LIKE 6 (979 aa).

Positions A8–S190 constitute a Clp R domain. 2 repeat regions span residues L12–L86 and V100–S190. Residues L833–L837 carry the EAR motif.

The protein belongs to the ClpA/ClpB family. Interacts with TPL/TPR in an EAR-motif dependent manner. Interacts with TPR3. Interacts with MAX2 and TPR2. Interacts with D14. The interaction with D14 occurs in the presence of (2'R) stereoisomers of strigolactones, but not (2'S) stereoisomers. Post-translationally, ubiquitinated upon strigolactone treatment. Probable proteolytic target of SCF(MAX2)-mediated stigolactone signaling. Detected in roots, seedlings and axillary branches. Expressed in the primary rosette buds and expanding leaves of adult rosettes, the vasculature of the hypocotyls, cotyledons, and mature roots, and in the midvein and petioles of young leaves.

It localises to the nucleus. Functionally, probable component of a transcriptional corepressor complex involved in branching control. Regulates cotyledon expansion and lateral root growth, but not germination or hypocotyl elongation. Promotes auxin transport and PIN1 accumulation in the stem and represses BRC1/TCP18 expression in axillary buds. The chain is Protein SMAX1-LIKE 6 from Arabidopsis thaliana (Mouse-ear cress).